A 68-amino-acid chain; its full sequence is DNA-directed RNA polymerase subunit omega (68 aa).

The protein belongs to the RNA polymerase subunit omega family. As to quaternary structure, the RNAP catalytic core consists of 2 alpha, 1 beta, 1 beta' and 1 omega subunit. When a sigma factor is associated with the core the holoenzyme is formed, which can initiate transcription.

It catalyses the reaction RNA(n) + a ribonucleoside 5'-triphosphate = RNA(n+1) + diphosphate. Promotes RNA polymerase assembly. Latches the N- and C-terminal regions of the beta' subunit thereby facilitating its interaction with the beta and alpha subunits. The protein is DNA-directed RNA polymerase subunit omega of Brevibacillus brevis (strain 47 / JCM 6285 / NBRC 100599).